A 378-amino-acid chain; its full sequence is Erythronate-4-phosphate dehydrogenase (378 aa).

Substrate contacts are provided by S45 and T66. D146 provides a ligand contact to NAD(+). The active site involves R207. Residue D231 participates in NAD(+) binding. E236 is an active-site residue. H253 functions as the Proton donor in the catalytic mechanism. G256 is an NAD(+) binding site.

Belongs to the D-isomer specific 2-hydroxyacid dehydrogenase family. PdxB subfamily. In terms of assembly, homodimer.

The protein localises to the cytoplasm. The enzyme catalyses 4-phospho-D-erythronate + NAD(+) = (R)-3-hydroxy-2-oxo-4-phosphooxybutanoate + NADH + H(+). The protein operates within cofactor biosynthesis; pyridoxine 5'-phosphate biosynthesis; pyridoxine 5'-phosphate from D-erythrose 4-phosphate: step 2/5. Catalyzes the oxidation of erythronate-4-phosphate to 3-hydroxy-2-oxo-4-phosphonooxybutanoate. The protein is Erythronate-4-phosphate dehydrogenase of Wigglesworthia glossinidia brevipalpis.